Reading from the N-terminus, the 183-residue chain is Large ribosomal subunit protein uL6 (183 aa).

It belongs to the universal ribosomal protein uL6 family. As to quaternary structure, part of the 50S ribosomal subunit.

In terms of biological role, this protein binds to the 23S rRNA, and is important in its secondary structure. It is located near the subunit interface in the base of the L7/L12 stalk, and near the tRNA binding site of the peptidyltransferase center. This chain is Large ribosomal subunit protein uL6, found in Malacoplasma penetrans (strain HF-2) (Mycoplasma penetrans).